The sequence spans 453 residues: Bifunctional protein GlmU (453 aa).

The pyrophosphorylase stretch occupies residues 1–226 (MKFSAVILAA…PIEVEGVNDR (226 aa)). Residues 8-11 (LAAG), Lys-22, Gln-73, 78-79 (GT), 100-102 (YGD), Gly-137, Glu-151, Asn-166, and Asn-224 contribute to the UDP-N-acetyl-alpha-D-glucosamine site. Residue Asp-102 participates in Mg(2+) binding. Asn-224 serves as a coordination point for Mg(2+). Positions 227-247 (AQLARLERAFQAAQAKKLLEQ) are linker. The N-acetyltransferase stretch occupies residues 248–453 (GVMLRDPARF…TGWQRPVKKK (206 aa)). 2 residues coordinate UDP-N-acetyl-alpha-D-glucosamine: Arg-330 and Lys-348. His-360 serves as the catalytic Proton acceptor. Residues Tyr-363 and Asn-374 each coordinate UDP-N-acetyl-alpha-D-glucosamine. Acetyl-CoA is bound by residues Ala-377, 383 to 384 (NY), Ser-402, Ala-420, and Arg-437.

This sequence in the N-terminal section; belongs to the N-acetylglucosamine-1-phosphate uridyltransferase family. In the C-terminal section; belongs to the transferase hexapeptide repeat family. As to quaternary structure, homotrimer. Requires Mg(2+) as cofactor.

The protein resides in the cytoplasm. It catalyses the reaction alpha-D-glucosamine 1-phosphate + acetyl-CoA = N-acetyl-alpha-D-glucosamine 1-phosphate + CoA + H(+). The catalysed reaction is N-acetyl-alpha-D-glucosamine 1-phosphate + UTP + H(+) = UDP-N-acetyl-alpha-D-glucosamine + diphosphate. It participates in nucleotide-sugar biosynthesis; UDP-N-acetyl-alpha-D-glucosamine biosynthesis; N-acetyl-alpha-D-glucosamine 1-phosphate from alpha-D-glucosamine 6-phosphate (route II): step 2/2. The protein operates within nucleotide-sugar biosynthesis; UDP-N-acetyl-alpha-D-glucosamine biosynthesis; UDP-N-acetyl-alpha-D-glucosamine from N-acetyl-alpha-D-glucosamine 1-phosphate: step 1/1. It functions in the pathway bacterial outer membrane biogenesis; LPS lipid A biosynthesis. In terms of biological role, catalyzes the last two sequential reactions in the de novo biosynthetic pathway for UDP-N-acetylglucosamine (UDP-GlcNAc). The C-terminal domain catalyzes the transfer of acetyl group from acetyl coenzyme A to glucosamine-1-phosphate (GlcN-1-P) to produce N-acetylglucosamine-1-phosphate (GlcNAc-1-P), which is converted into UDP-GlcNAc by the transfer of uridine 5-monophosphate (from uridine 5-triphosphate), a reaction catalyzed by the N-terminal domain. The polypeptide is Bifunctional protein GlmU (Vibrio vulnificus (strain CMCP6)).